Here is a 340-residue protein sequence, read N- to C-terminus: DNA-directed RNA polymerase subunit alpha (340 aa).

An alpha N-terminal domain (alpha-NTD) region spans residues 1-238 (MVDPIVTKNW…EQLSIFINFD (238 aa)). The alpha C-terminal domain (alpha-CTD) stretch occupies residues 255–340 (LNENLFRSVD…AAPQGGAPKV (86 aa)).

This sequence belongs to the RNA polymerase alpha chain family. Homodimer. The RNAP catalytic core consists of 2 alpha, 1 beta, 1 beta' and 1 omega subunit. When a sigma factor is associated with the core the holoenzyme is formed, which can initiate transcription.

The catalysed reaction is RNA(n) + a ribonucleoside 5'-triphosphate = RNA(n+1) + diphosphate. Its function is as follows. DNA-dependent RNA polymerase catalyzes the transcription of DNA into RNA using the four ribonucleoside triphosphates as substrates. This chain is DNA-directed RNA polymerase subunit alpha, found in Anaeromyxobacter dehalogenans (strain 2CP-1 / ATCC BAA-258).